The sequence spans 388 residues: Formate-dependent phosphoribosylglycinamide formyltransferase (388 aa).

N(1)-(5-phospho-beta-D-ribosyl)glycinamide contacts are provided by residues 15 to 16 (EL) and Glu-75. ATP contacts are provided by residues Arg-107, Lys-148, 153 to 158 (SSGKGQ), 188 to 191 (EEFL), and Glu-196. An ATP-grasp domain is found at 112 to 302 (DLAAGELALR…EFELHLRAVL (191 aa)). Mg(2+)-binding residues include Glu-261 and Glu-273. Residues Asp-280, Lys-350, and 357 to 358 (RR) each bind N(1)-(5-phospho-beta-D-ribosyl)glycinamide.

The protein belongs to the PurK/PurT family. Homodimer.

It carries out the reaction N(1)-(5-phospho-beta-D-ribosyl)glycinamide + formate + ATP = N(2)-formyl-N(1)-(5-phospho-beta-D-ribosyl)glycinamide + ADP + phosphate + H(+). Its pathway is purine metabolism; IMP biosynthesis via de novo pathway; N(2)-formyl-N(1)-(5-phospho-D-ribosyl)glycinamide from N(1)-(5-phospho-D-ribosyl)glycinamide (formate route): step 1/1. Involved in the de novo purine biosynthesis. Catalyzes the transfer of formate to 5-phospho-ribosyl-glycinamide (GAR), producing 5-phospho-ribosyl-N-formylglycinamide (FGAR). Formate is provided by PurU via hydrolysis of 10-formyl-tetrahydrofolate. This Parasynechococcus marenigrum (strain WH8102) protein is Formate-dependent phosphoribosylglycinamide formyltransferase.